The sequence spans 485 residues: Pelle-like serine/threonine-protein kinase pik-1 (485 aa).

The span at 115 to 132 (TSRVSKQMVQPPGSQSAS) shows a compositional bias: polar residues. A disordered region spans residues 115–155 (TSRVSKQMVQPPGSQSASRLKKTEIKESSPSPAAAAASQLS). Residues 142–152 (SSPSPAAAAAS) are compositionally biased toward low complexity. One can recognise a Protein kinase domain in the interval 185-485 (FAVSNVIGKG…LCKNSIPPVV (301 aa)). ATP is bound by residues 191–199 (IGKGGYGTV) and Lys-214. The Proton acceptor role is filled by Asp-318.

Belongs to the protein kinase superfamily. TKL Ser/Thr protein kinase family. Pelle subfamily. Interacts with actl-1. As to expression, expressed in the nervous system.

The enzyme catalyses L-seryl-[protein] + ATP = O-phospho-L-seryl-[protein] + ADP + H(+). It carries out the reaction L-threonyl-[protein] + ATP = O-phospho-L-threonyl-[protein] + ADP + H(+). In terms of biological role, through association with the adapter actl-1, may act downstream of the receptor complex composed of ilcr-1 and ilcr-2, which is a signaling complex that modulates neuronal activity and animal behavior in response to sensory neuron input. This is Pelle-like serine/threonine-protein kinase pik-1 from Caenorhabditis elegans.